The chain runs to 195 residues: Peptidyl-tRNA hydrolase (195 aa).

Tyr17 lines the tRNA pocket. Catalysis depends on His22, which acts as the Proton acceptor. TRNA-binding residues include Phe68, Asn70, and Asn116.

Belongs to the PTH family. Monomer.

The protein localises to the cytoplasm. It carries out the reaction an N-acyl-L-alpha-aminoacyl-tRNA + H2O = an N-acyl-L-amino acid + a tRNA + H(+). In terms of biological role, hydrolyzes ribosome-free peptidyl-tRNAs (with 1 or more amino acids incorporated), which drop off the ribosome during protein synthesis, or as a result of ribosome stalling. Its function is as follows. Catalyzes the release of premature peptidyl moieties from peptidyl-tRNA molecules trapped in stalled 50S ribosomal subunits, and thus maintains levels of free tRNAs and 50S ribosomes. The polypeptide is Peptidyl-tRNA hydrolase (Shewanella amazonensis (strain ATCC BAA-1098 / SB2B)).